A 165-amino-acid chain; its full sequence is NADPH-dependent 7-cyano-7-deazaguanine reductase (165 aa).

Residue Cys56 is the Thioimide intermediate of the active site. Asp63 serves as the catalytic Proton donor. Residues 78–80 (VES) and 97–98 (HE) each bind substrate.

It belongs to the GTP cyclohydrolase I family. QueF type 1 subfamily.

Its subcellular location is the cytoplasm. The enzyme catalyses 7-aminomethyl-7-carbaguanine + 2 NADP(+) = 7-cyano-7-deazaguanine + 2 NADPH + 3 H(+). The protein operates within tRNA modification; tRNA-queuosine biosynthesis. Catalyzes the NADPH-dependent reduction of 7-cyano-7-deazaguanine (preQ0) to 7-aminomethyl-7-deazaguanine (preQ1). The chain is NADPH-dependent 7-cyano-7-deazaguanine reductase from Geobacillus thermodenitrificans (strain NG80-2).